Reading from the N-terminus, the 1441-residue chain is Receptor-type tyrosine-protein phosphatase T (1441 aa).

The first 25 residues, 1-25 (MASLAALALSLLLRLQLPPLPGARA), serve as a signal peptide directing secretion. Topologically, residues 26-747 (QSAAGGCSFD…EKQVDNTVKM (722 aa)) are extracellular. The MAM domain maps to 30-191 (GGCSFDEHYS…VRVLAHPCRK (162 aa)). N-linked (GlcNAc...) asparagine glycans are attached at residues asparagine 78, asparagine 98, asparagine 137, and asparagine 208. An Ig-like C2-type domain is found at 193-284 (PHFLRLQNVE…SGVSNYAELI (92 aa)). Cysteines 213 and 267 form a disulfide. 4 consecutive Fibronectin type-III domains span residues 291-384 (PIAP…TKCA), 389-483 (GPQN…TEED), 484-590 (VPGA…SAPS), and 591-726 (MPEY…ATKG). N-linked (GlcNAc...) asparagine glycosylation is found at asparagine 421, asparagine 510, asparagine 547, asparagine 601, asparagine 654, and asparagine 684. The helical transmembrane segment at 748 to 768 (AGVIAGLLMFIIILLGVMLTI) threads the bilayer. Topologically, residues 769-1441 (KRRRNAYSYS…EVALEYLSSF (673 aa)) are cytoplasmic. The tract at residues 790–839 (TQSGAQREMGPVASADKPTTKLSASRNDEGFSSSSQDVNGFTDGSRGELS) is disordered. Positions 809–828 (TKLSASRNDEGFSSSSQDVN) are enriched in polar residues. 2 consecutive Tyrosine-protein phosphatase domains span residues 889–1143 (FKEE…ILEA) and 1175–1437 (IKDE…ALEY). Substrate contacts are provided by residues aspartate 1052, 1084–1090 (CSAGAGR), and glutamine 1128. The Phosphocysteine intermediate role is filled by cysteine 1084. Serine 1208 carries the phosphoserine modification. The Phosphocysteine intermediate role is filled by cysteine 1378.

Belongs to the protein-tyrosine phosphatase family. Receptor class 2B subfamily. As to expression, expressed in colon, lung, heart and testis, as well as in fetal and adult brain. Not detected in muscle and peripheral blood leukocytes.

It is found in the membrane. The enzyme catalyses O-phospho-L-tyrosyl-[protein] + H2O = L-tyrosyl-[protein] + phosphate. May be involved in both signal transduction and cellular adhesion in the CNS. The sequence is that of Receptor-type tyrosine-protein phosphatase T (PTPRT) from Homo sapiens (Human).